A 270-amino-acid chain; its full sequence is NAD kinase (270 aa).

D49 acts as the Proton acceptor in catalysis. Residues 49-50 (DG), R54, 126-127 (NE), R152, D154, 165-170 (TAYNKS), A189, and Q227 contribute to the NAD(+) site.

Belongs to the NAD kinase family. A divalent metal cation is required as a cofactor.

It is found in the cytoplasm. The catalysed reaction is NAD(+) + ATP = ADP + NADP(+) + H(+). Involved in the regulation of the intracellular balance of NAD and NADP, and is a key enzyme in the biosynthesis of NADP. Catalyzes specifically the phosphorylation on 2'-hydroxyl of the adenosine moiety of NAD to yield NADP. In Lactococcus lactis subsp. lactis (strain IL1403) (Streptococcus lactis), this protein is NAD kinase.